Here is a 261-residue protein sequence, read N- to C-terminus: MYLEKLRSQNPLTICITNDVVKNFTANGLLALGASPAMSEYPEDLEDLLPYTKGLLINTGTLTNETWELYKSALDIAEKYGVPTVLDPVAAGAGAYRKKVTLDLLHHHTISLVRGNAGEIAALIGESIETKGVDSAQIDNVGELALRANQQLGIPVVITGKKDAVAVNHQVRILENGSELMPLVTGTGCLLGAVLAAFIHLADEDSLLDCLEEVLSAYSIAGEMAEQKTSLPGTFQIEFINSLYAIQSEEVEENKKVIHYE.

Met-38 contributes to the substrate binding site. ATP contacts are provided by Arg-114 and Thr-159. Gly-186 serves as a coordination point for substrate.

The protein belongs to the Thz kinase family. It depends on Mg(2+) as a cofactor.

It catalyses the reaction 5-(2-hydroxyethyl)-4-methylthiazole + ATP = 4-methyl-5-(2-phosphooxyethyl)-thiazole + ADP + H(+). Its pathway is cofactor biosynthesis; thiamine diphosphate biosynthesis; 4-methyl-5-(2-phosphoethyl)-thiazole from 5-(2-hydroxyethyl)-4-methylthiazole: step 1/1. Functionally, catalyzes the phosphorylation of the hydroxyl group of 4-methyl-5-beta-hydroxyethylthiazole (THZ). The chain is Hydroxyethylthiazole kinase from Streptococcus suis (strain 05ZYH33).